The following is a 64-amino-acid chain: Cecropin-A (64 aa).

Residues 1 to 22 form the signal peptide; the sequence is MNFSRIFFFVFACLTALAMVNA. The propeptide at 23-26 is removed by a dipeptidylpeptidase; it reads APEP. At Lys-63 the chain carries Lysine amide.

Belongs to the cecropin family. Post-translationally, a protein with the same sequence as cecropin A, but lacking the carboxyl blocking group, has been isolated and called cecropin C.

The protein localises to the secreted. Its function is as follows. Cecropins have lytic and antibacterial activity against several Gram-positive and Gram-negative bacteria. In Hyalophora cecropia (Cecropia moth), this protein is Cecropin-A.